The primary structure comprises 208 residues: Single-stranded DNA-binding protein DdrA (208 aa).

This sequence belongs to the RAD52 family. As to quaternary structure, homooligomer composed of 8 to 10 subunits; probably arranged in a ring-structure.

In terms of biological role, ssDNA-binding protein that contributes to the ionizing radiation resistance of D.radiodurans. Plays a role in DNA repair and genome reconstitution, in a RecA-independent process, since DdrA is essential for recovery from severe genomic fragmentation as a result of exposure to severe levels of ionizing radiation in an environment lacking nutrients. In vitro, binds to the 3'-ends of single-stranded DNA, protecting them from nuclease degradation. Thus, DdrA is part of a DNA end-protection system that helps to preserve genome integrity following irradiation or desiccation. Does not display DNA strand annealing activity, unlike eukaryotic Rad52 protein homologs. The chain is Single-stranded DNA-binding protein DdrA (ddrA) from Deinococcus radiodurans (strain ATCC 13939 / DSM 20539 / JCM 16871 / CCUG 27074 / LMG 4051 / NBRC 15346 / NCIMB 9279 / VKM B-1422 / R1).